The sequence spans 631 residues: Pescadillo homolog (631 aa).

One can recognise a BRCT domain in the interval 321–414; the sequence is RLRNLFKGLK…QLLPTNKYFL (94 aa). 2 disordered regions span residues 450–469 and 489–569; these read HAQS…EDDT and EYKK…MVKP. Residues Ser-453 and Ser-457 each carry the phosphoserine modification. 2 stretches are compositionally biased toward acidic residues: residues 454–469 and 499–524; these read DDES…EDDT and VNED…EELD. Positions 510-541 form a coiled coil; the sequence is FDGEQESDEEEEELDEKTKRLQEEKKKMSVQS. Residues 525-536 show a composition bias toward basic and acidic residues; sequence EKTKRLQEEKKK. Basic residues predominate over residues 543-552; sequence KVHKVNKRQL. The span at 553-562 shows a compositional bias: basic and acidic residues; it reads HKAEVDEHRL.

It belongs to the pescadillo family.

The protein localises to the nucleus. The protein resides in the nucleolus. Its subcellular location is the nucleoplasm. In terms of biological role, required for maturation of ribosomal RNAs and formation of the large ribosomal subunit. The chain is Pescadillo homolog from Drosophila mojavensis (Fruit fly).